The primary structure comprises 338 residues: 26S proteasome regulatory subunit RPN8 (338 aa).

Position 2 is an N-acetylserine (Ser2). The MPN domain occupies 8–143 (VTIAPLVLLS…TDAYVAIEQV (136 aa)). Positions 301-326 (IQEQRVKDKQSKVSDDSESESGDKEA) are enriched in basic and acidic residues. The interval 301–338 (IQEQRVKDKQSKVSDDSESESGDKEATAPLIQRKNKKN) is disordered. Ser314, Ser317, and Ser319 each carry phosphoserine. The residue at position 327 (Thr327) is a Phosphothreonine.

This sequence belongs to the peptidase M67A family. In terms of processing, N-acetylated by NAT1.

Its function is as follows. Acts as a regulatory subunit of the 26S proteasome which is involved in the ATP-dependent degradation of ubiquitinated proteins. This Saccharomyces cerevisiae (strain ATCC 204508 / S288c) (Baker's yeast) protein is 26S proteasome regulatory subunit RPN8 (RPN8).